A 2025-amino-acid chain; its full sequence is Pericentriolar material 1 protein (2025 aa).

Residues 1-91 (MATGGGPFEE…TFPHSRYMTQ (91 aa)) are disordered. Alanine 2 is modified (N-acetylalanine). Residues 2 to 1458 (ATGGGPFEEV…TWVASNSELT (1457 aa)) are mediates interaction with DZIP1. Phosphoserine occurs at positions 65, 68, 69, 93, 110, 116, 119, and 159. A disordered region spans residues 111–140 (DLDQRSIGSDSQGRATAANNKRQLSENRKP). Positions 116-132 (SIGSDSQGRATAANNKR) are enriched in polar residues. Residues 218-301 (KASSMREDLV…QLRALQGRQA (84 aa)) are a coiled coil. The segment at 354-390 (RDSQPPAVPDNRRQAESLSLTREISQSRNPSVSEHLP) is disordered. Over residues 369-385 (ESLSLTREISQSRNPSV) the composition is skewed to polar residues. Position 370 is a phosphoserine (serine 370). At serine 372 the chain carries Phosphoserine; by PLK4. Serine 384 carries the phosphoserine modification. At lysine 399 the chain carries N6-acetyllysine. 2 coiled-coil regions span residues 399-426 (KMRV…QHLN) and 492-518 (AEKL…YEQT). 2 disordered regions span residues 528 to 553 (ENTK…VTNI) and 565 to 586 (VNTN…VNSN). Over residues 531 to 540 (KDEETEESEY) the composition is skewed to acidic residues. A Phosphoserine modification is found at serine 593. The disordered stretch occupies residues 620 to 654 (AHGEDEEEEVEEEGVSGASLSSRRSSLVDEAPEDE). The segment covering 623–633 (EDEEEEVEEEG) has biased composition (acidic residues). Residues 634–644 (VSGASLSSRRS) are compositionally biased toward low complexity. Serine 644 carries the phosphoserine modification. 2 coiled-coil regions span residues 652–772 (EDEE…PDLQ) and 822–856 (SDMR…GLAE). At threonine 857 the chain carries Phosphothreonine. Phosphoserine occurs at positions 859, 864, 867, and 870. Disordered regions lie at residues 866-885 (RSDG…EKTM) and 913-940 (TDEE…NQNS). Polar residues predominate over residues 870-879 (SENLCTPQQS). A Phosphothreonine modification is found at threonine 875. Residues serine 957, serine 974, serine 985, and serine 988 each carry the phosphoserine modification. 2 coiled-coil regions span residues 985–1017 (SELS…CQTL) and 1061–1086 (QLTW…QNQH). 2 disordered regions span residues 1081–1105 (RQQN…PSSP) and 1149–1213 (FSQN…YDQE). Basic and acidic residues predominate over residues 1086-1096 (HPEKPRSKERG). The span at 1149–1169 (FSQNVSTPTEQQQPLAQNPSG) shows a compositional bias: polar residues. A phosphoserine mark is found at serine 1182 and serine 1185. Over residues 1189–1198 (EKQRNQKQPE) the composition is skewed to basic and acidic residues. Serine 1228, serine 1254, serine 1257, serine 1259, and serine 1260 each carry phosphoserine. The interval 1230–1310 (EKATNSNRKN…STQLKSRVKN (81 aa)) is disordered. Residues 1268 to 1285 (TTVTKTFKTRKASAQASL) show a composition bias toward polar residues. Residues serine 1315 and serine 1317 each carry the phosphoserine modification. Positions 1319–1338 (SSTCEPCKNRNRHSAQTEEP) are disordered. Residue threonine 1466 is modified to Phosphothreonine. Serine 1571, serine 1695, serine 1729, serine 1766, serine 1769, serine 1777, and serine 1783 each carry phosphoserine. Residues 1720–1943 (KRILEGDHGS…AGSPDTESPV (224 aa)) are disordered. Residues 1756-1768 (YDAKGPKNVRSDV) show a composition bias toward basic and acidic residues. The span at 1784 to 1798 (INLSKAESQALTNYG) shows a compositional bias: polar residues. A compositionally biased stretch (acidic residues) spans 1800 to 1816 (GEDENEDEEMEDFEESP). Polar residues-rich tracts occupy residues 1818–1828 (DIQTSLQANTE), 1849–1858 (ESTNVPSDQE), 1879–1901 (ENEQ…SSKQ), and 1925–1934 (AQETPESSLA). 2 positions are modified to phosphoserine: serine 1959 and serine 1978.

Belongs to the PCM1 family. Self-associates. Interacts with BBS4, BBS8, CETN3, HAP1, NDE1, NDEL1, MAP1LC3B, GABARAPAL2, and GABARAP. Interacts with CEP131; the interaction increases in response to ultraviolet light (UV) radiation. Associates with microtubule; association to microtubule is reduced in response to cellular stress, such as ultraviolet light (UV) radiation or heat shock, in a process that requires p38 MAP kinase signaling. Interacts with C2CD3. Interacts with CFAP263. Interacts with SSX2IP. Interacts with CCDC13. Interacts with CEP290. Interacts with PARD6A. Interacts with KIAA0753/OFIP, CEP20/FOR20 and OFD1; the interaction with CEP20/FOR20 and OFD1 may be mediated by KIAA0753/OFIP. Interacts with CCDC66. Interacts with CCDC61. Interacts with DZIP1; localizes DZIP1 and the associated BBSome to centriolar satellite. Interacts with CSTPP1, TTLL1, TPGS1 and LRRC49. Interacts with CFAP53. Ubiquitinated. Undergoes monoubiquitination catalyzed by the E3 ubiquitin-protein ligase MIB1 in proliferating cells, preventing cilia formation. Monoubiquitination by MIB1 is inhibited in response to cellular stress, such as ultraviolet light (UV) radiation or heat shock, resulting in cilia formation initiation. Post-translationally, phosphorylated on multiple serine and threonine residues by DYRK3 during the G2-to-M transition, after the nuclear-envelope breakdown. Phosphorylation by DYRK3 promotes disassembly of pericentriolar material. Phosphorylation at Ser-372 mediated by PLK4 is required to maintain the integrity of centriolar satellites. As to expression, expressed in the hippocampus and dentate gyrus, the columnar epithelial cells of bronchioles, the olfactory epithelium, the pericardium and the inner segment of the retina.

Its subcellular location is the cytoplasm. The protein resides in the cytoskeleton. It localises to the microtubule organizing center. The protein localises to the centrosome. It is found in the cytoplasmic granule. Its subcellular location is the centriolar satellite. The protein resides in the cilium basal body. Its function is as follows. Required for centrosome assembly and function. Essential for the correct localization of several centrosomal proteins including CEP250, CETN3, PCNT and NEK2. Required to anchor microtubules to the centrosome. Also involved in cilium biogenesis by recruiting the BBSome, a ciliary protein complex involved in cilium biogenesis, to the centriolar satellites. Recruits the tubulin polyglutamylase complex (TPGC) to centriolar satellites. This is Pericentriolar material 1 protein from Mus musculus (Mouse).